Consider the following 376-residue polypeptide: Partitioning defective 6 homolog gamma (376 aa).

The region spanning 18 to 98 is the PB1 domain; sequence AVEVKSKFGA…PLLRVFIQKR (81 aa). The interval 127-254 is interaction with PARD3 and CDC42; the sequence is RRRAHLDIGL…VTVKPANQRN (128 aa). The region spanning 134 to 151 is the Pseudo-CRIB domain; it reads IGLPRDFRPVSSIIDVDL. The PDZ domain occupies 158–251; it reads RVRLHRHGCE…NLIVTVKPAN (94 aa). Residues 356 to 376 are disordered; it reads PRHSLALPPGGVEEHGPAVTL. Positions 367-376 are enriched in basic and acidic residues; that stretch reads VEEHGPAVTL.

Belongs to the PAR6 family. In terms of assembly, interacts with PARD3. Interacts with GTP-bound forms of CDC42, RHOQ/TC10 and RAC1. Interacts with the N-terminal part of PRKCI and PRKCZ. As to expression, widely expressed, with a higher expression in fetal and adult kidney.

Its subcellular location is the cytoplasm. The protein resides in the cell membrane. The protein localises to the cell junction. It is found in the tight junction. Its function is as follows. Adapter protein involved in asymmetrical cell division and cell polarization processes. May play a role in the formation of epithelial tight junctions. The PARD6-PARD3 complex links GTP-bound Rho small GTPases to atypical protein kinase C proteins. This is Partitioning defective 6 homolog gamma (PARD6G) from Homo sapiens (Human).